The primary structure comprises 317 residues: Melanocyte-stimulating hormone receptor (317 aa).

The Extracellular portion of the chain corresponds to 1 to 37; the sequence is MPIHGAPRKLLGSLNSTPTATPKLGLAANHTGAPCLE. Residue asparagine 29 is glycosylated (N-linked (GlcNAc...) asparagine). A helical transmembrane segment spans residues 38 to 63; that stretch reads VSIPDGLFLSLGLVSLVENVLVVAAI. Topologically, residues 64–72 are cytoplasmic; that stretch reads AKNRNLHSP. Residues 73–93 form a helical membrane-spanning segment; that stretch reads MYCFICCLALSDLLVSGSNML. Over 94–118 the chain is Extracellular; it reads EMAVVLLLEGGALATRASVVQQLHN. Residues 119–140 form a helical membrane-spanning segment; that stretch reads TIDVLTCSSMLCSLCFLGAIAV. Topologically, residues 141–163 are cytoplasmic; sequence DRHISIFYALRYHSIMTLPRAQR. Residues 164–183 form a helical membrane-spanning segment; the sequence is VIAAIWVASILSSTLFITYY. Residues 184–191 are Extracellular-facing; it reads DHAAVLLC. Residues 192 to 211 traverse the membrane as a helical segment; sequence LVVFFLAMLVLMAVLYVHML. At 212 to 240 the chain is on the cytoplasmic side; that stretch reads ARACQHAQGITRLHKRQPPAHQGFGLRGA. The chain crosses the membrane as a helical span at residues 241-266; the sequence is ATLTILLGIFFLCWGPFFLHLKLVVF. Over 267 to 279 the chain is Extracellular; it reads CPQHLTCSCIFKN. Residues 280–300 form a helical membrane-spanning segment; the sequence is FKVFLTLIICNTIIDPLIYAF. Topologically, residues 301-317 are cytoplasmic; the sequence is RSQELRRTLKEVLLCSW. A lipid anchor (S-palmitoyl cysteine) is attached at cysteine 315.

Belongs to the G-protein coupled receptor 1 family. As to quaternary structure, interacts with MGRN1, but does not undergo MGRN1-mediated ubiquitination; this interaction competes with GNAS-binding and thus inhibits agonist-induced cAMP production. Interacts with OPN3; the interaction results in a decrease in MC1R-mediated cAMP signaling and ultimately a decrease in melanin production in melanocytes.

It is found in the cell membrane. Receptor for MSH (alpha, beta and gamma) and ACTH. The activity of this receptor is mediated by G proteins which activate adenylate cyclase. Mediates melanogenesis, the production of eumelanin (black/brown) and phaeomelanin (red/yellow), via regulation of cAMP signaling in melanocytes. This chain is Melanocyte-stimulating hormone receptor (MC1R), found in Saimiri oerstedii (Central American squirrel monkey).